We begin with the raw amino-acid sequence, 210 residues long: DNA-directed RNA polymerases I, II, and III subunit RPABC1 (210 aa).

At methionine 1 the chain carries N-acetylmethionine. Lysine 81 is covalently cross-linked (Glycyl lysine isopeptide (Lys-Gly) (interchain with G-Cter in SUMO2)).

This sequence belongs to the archaeal Rpo5/eukaryotic RPB5 RNA polymerase subunit family. Component of the RNA polymerase I (Pol I), RNA polymerase II (Pol II) and RNA polymerase III (Pol III) complexes consisting of at least 13, 12 and 17 subunits, respectively. Pol I complex consists of a ten-subunit catalytic core composed of POLR1A/RPA1, POLR1B/RPA2, POLR1C/RPAC1, POLR1D/RPAC2, POLR1H/RPA12, POLR2E/RPABC1, POLR2F/RPABC2, POLR2H/RPABC3, POLR2K/RPABC4 and POLR2L/RPABC5; a mobile stalk subunit POLR1F/RPA43 protruding from the core and additional subunits homologous to general transcription factors POLR1E/RPA49 and POLR1G/RPA34. Part of Pol I pre-initiation complex (PIC), in which Pol I core assembles with RRN3 and promoter-bound UTBF and SL1/TIF-IB complex. Pol II complex contains a ten-subunit catalytic core composed of POLR2A/RPB1, POLR2B/RPB2, POLR2C/RPB3, POLR2I/RPB9, POLR2J/RPB11, POLR2E/RPABC1, POLR2F/RPABC2, POLR2H/RPABC3, POLR2K/RPABC4 and POLR2L/RPABC5 and a mobile stalk composed of two subunits POLR2D/RPB4 and POLR2G/RPB7. Part of Pol II(G) complex, in which Pol II core associates with an additional subunit POLR2M; unlike conventional Pol II, Pol II(G) functions as a transcriptional repressor. Part of TBP-based Pol II pre-initiation complex (PIC), in which Pol II core assembles with general transcription factors and other specific initiation factors including GTF2E1, GTF2E2, GTF2F1, GTF2F2, TCEA1, ERCC2, ERCC3, GTF2H2, GTF2H3, GTF2H4, GTF2H5, GTF2A1, GTF2A2, GTF2B and TBP; this large multi-subunit PIC complex mediates DNA unwinding and targets Pol II core to the transcription start site where the first phosphodiester bond forms. In Pol II complex, this subunit is present in 2-fold molar excess over the other subunits. Pol III complex consists of a ten-subunit catalytic core composed of POLR3A/RPC1, POLR3B/RPC2, POLR1C/RPAC1, POLR1D/RPAC2, POLR3K/RPC10, POLR2E/RPABC1, POLR2F/RPABC2, POLR2H/RPABC3, POLR2K/RPABC4 and POLR2L/RPABC5; a mobile stalk composed of two subunits POLR3H/RPC8 and CRCP/RPC9, protruding from the core and functioning primarily in transcription initiation; and additional subunits homologous to general transcription factors of the RNA polymerase II machinery, POLR3C/RPC3-POLR3F/RPC6-POLR3G/RPC7 heterotrimer required for transcription initiation and POLR3D/RPC4-POLR3E/RPC5 heterodimer involved in both transcription initiation and termination. Component of the PAQosome complex which is responsible for the biogenesis of several protein complexes and which consists of R2TP complex members RUVBL1, RUVBL2, RPAP3 and PIH1D1, URI complex members PFDN2, PFDN6, PDRG1, UXT and URI1 as well as ASDURF, POLR2E and DNAAF10/WDR92. Interacts with URI1.

It is found in the nucleus. Its subcellular location is the nucleolus. Its function is as follows. DNA-dependent RNA polymerase catalyzes the transcription of DNA into RNA using the four ribonucleoside triphosphates as substrates. Common component of RNA polymerases I, II and III which synthesize ribosomal RNA precursors, mRNA precursors and many functional non-coding RNAs, and small RNAs, such as 5S rRNA and tRNAs, respectively. Pol II is the central component of the basal RNA polymerase II transcription machinery. Pols are composed of mobile elements that move relative to each other. In Pol II, POLR2E/RPABC1 is part of the lower jaw surrounding the central large cleft and thought to grab the incoming DNA template. Seems to be the major component in this process. This Pongo abelii (Sumatran orangutan) protein is DNA-directed RNA polymerases I, II, and III subunit RPABC1 (POLR2E).